The chain runs to 89 residues: Small ribosomal subunit protein uS15 (89 aa).

The protein belongs to the universal ribosomal protein uS15 family. Part of the 30S ribosomal subunit. Forms a bridge to the 50S subunit in the 70S ribosome, contacting the 23S rRNA.

In terms of biological role, one of the primary rRNA binding proteins, it binds directly to 16S rRNA where it helps nucleate assembly of the platform of the 30S subunit by binding and bridging several RNA helices of the 16S rRNA. Forms an intersubunit bridge (bridge B4) with the 23S rRNA of the 50S subunit in the ribosome. This Oleidesulfovibrio alaskensis (strain ATCC BAA-1058 / DSM 17464 / G20) (Desulfovibrio alaskensis) protein is Small ribosomal subunit protein uS15.